The following is a 119-amino-acid chain: DNA-binding protein inhibitor ID-3 (119 aa).

In terms of domain architecture, bHLH spans 28 to 80; that stretch reads RGKGPAAEEPLSLLDDMNHCYSRLRELVPGVPRGTQLSQVEILQRVIDYILDL.

As to quaternary structure, homodimer, and heterodimer with other HLH proteins. Interacts with COPS5 and COPS7A. Interacts with IFI204. Interacts with GATA4 and NKX2-5. Interacts with ANKRD2; both proteins cooperate in myoblast differentiation. Interacts with CLOCK and BMAL1. Expressed abundantly in lung, kidney and adrenal gland, but not in adult brain.

It localises to the nucleus. Functionally, transcriptional regulator (lacking a basic DNA binding domain) which negatively regulates the basic helix-loop-helix (bHLH) transcription factors by forming heterodimers and inhibiting their DNA binding and transcriptional activity. Implicated in regulating a variety of cellular processes, including cellular growth, senescence, differentiation, apoptosis, angiogenesis, and neoplastic transformation. Involved in myogenesis by inhibiting skeletal muscle and cardiac myocyte differentiation and promoting muscle precursor cells proliferation. Inhibits the binding of E2A-containing protein complexes to muscle creatine kinase E-box enhancer. Regulates the circadian clock by repressing the transcriptional activator activity of the CLOCK-BMAL1 heterodimer. In Homo sapiens (Human), this protein is DNA-binding protein inhibitor ID-3 (ID3).